Here is a 180-residue protein sequence, read N- to C-terminus: Large ribosomal subunit protein uL5 (180 aa).

It belongs to the universal ribosomal protein uL5 family. As to quaternary structure, part of the 50S ribosomal subunit; part of the 5S rRNA/L5/L18/L25 subcomplex. Contacts the 5S rRNA and the P site tRNA. Forms a bridge to the 30S subunit in the 70S ribosome.

In terms of biological role, this is one of the proteins that bind and probably mediate the attachment of the 5S RNA into the large ribosomal subunit, where it forms part of the central protuberance. In the 70S ribosome it contacts protein S13 of the 30S subunit (bridge B1b), connecting the 2 subunits; this bridge is implicated in subunit movement. Contacts the P site tRNA; the 5S rRNA and some of its associated proteins might help stabilize positioning of ribosome-bound tRNAs. The protein is Large ribosomal subunit protein uL5 of Streptococcus pyogenes serotype M1.